We begin with the raw amino-acid sequence, 327 residues long: Transaldolase (327 aa).

Residue Lys-132 is the Schiff-base intermediate with substrate of the active site.

The protein belongs to the transaldolase family. Type 1 subfamily. As to quaternary structure, homodimer.

Its subcellular location is the cytoplasm. The enzyme catalyses D-sedoheptulose 7-phosphate + D-glyceraldehyde 3-phosphate = D-erythrose 4-phosphate + beta-D-fructose 6-phosphate. Its pathway is carbohydrate degradation; pentose phosphate pathway; D-glyceraldehyde 3-phosphate and beta-D-fructose 6-phosphate from D-ribose 5-phosphate and D-xylulose 5-phosphate (non-oxidative stage): step 2/3. Transaldolase is important for the balance of metabolites in the pentose-phosphate pathway. This is Transaldolase from Chlamydia caviae (strain ATCC VR-813 / DSM 19441 / 03DC25 / GPIC) (Chlamydophila caviae).